The following is a 339-amino-acid chain: MIDDRKLQILRAIIQDYISTGEPVGSRTIAKKYNLGVSSATIRNEMADLEDMGFLEQPHTSAGRIPSSRGYRLYVDRMIEFERLSSEEEGLIRSSIIDGTLYEVDKIIKQTSALLSELTKMTCIVKAPSVHKSFVKSIQLLKVDDVSILCVLVTDNGVIRNTVIKVKSVPISEELIKISKIITERLKNLTIEQINLEVISNLNRALSGYEDIVNAVLPALYESLKGDETSEVFLEGTINIFNYPEYNNIHKAKEILELLHDKKSISELISDSDDMTVKIGDEIFVPEAKECSIISAGYHVGDRSLGTIALIGPRRINYSKVLSIMTEVMKELNETLKNK.

This sequence belongs to the HrcA family.

Its function is as follows. Negative regulator of class I heat shock genes (grpE-dnaK-dnaJ and groELS operons). Prevents heat-shock induction of these operons. The polypeptide is Heat-inducible transcription repressor HrcA (Clostridium perfringens (strain ATCC 13124 / DSM 756 / JCM 1290 / NCIMB 6125 / NCTC 8237 / Type A)).